A 693-amino-acid chain; its full sequence is DNA ligase (693 aa).

NAD(+) is bound by residues 45–49 (DSEYD), 94–95 (SI), and Glu131. Lys133 acts as the N6-AMP-lysine intermediate in catalysis. NAD(+)-binding residues include Arg154, Glu190, Lys307, and Lys331. Residues Cys429, Cys432, Cys447, and Cys453 each contribute to the Zn(2+) site. The region spanning 615-693 (ASSSKLEGKT…EEGLLSLLAE (79 aa)) is the BRCT domain.

This sequence belongs to the NAD-dependent DNA ligase family. LigA subfamily. The cofactor is Mg(2+). Mn(2+) is required as a cofactor.

It carries out the reaction NAD(+) + (deoxyribonucleotide)n-3'-hydroxyl + 5'-phospho-(deoxyribonucleotide)m = (deoxyribonucleotide)n+m + AMP + beta-nicotinamide D-nucleotide.. In terms of biological role, DNA ligase that catalyzes the formation of phosphodiester linkages between 5'-phosphoryl and 3'-hydroxyl groups in double-stranded DNA using NAD as a coenzyme and as the energy source for the reaction. It is essential for DNA replication and repair of damaged DNA. The protein is DNA ligase of Methylobacillus flagellatus (strain ATCC 51484 / DSM 6875 / VKM B-1610 / KT).